The chain runs to 392 residues: Cell division protein DivIB (392 aa).

A disordered region spans residues 1 to 87; the sequence is MSEKDNNLTP…ETQSSEAPIE (87 aa). Topologically, residues 1 to 131 are cytoplasmic; sequence MSEKDNNLTP…KGSAPLLKKM (131 aa). The span at 14 to 32 shows a compositional bias: basic and acidic residues; sequence KHLEYQKRKAEEAKKEKKA. Residues 58–76 are compositionally biased toward acidic residues; that stretch reads TRDEAESAELLEEGFETNN. Residues 132-152 form a helical membrane-spanning segment; that stretch reads WPALAIVVLVFVGSLYLISPL. Residues 153–224 form the POTRA domain; that stretch reads SKISTFSVSG…NRFEAIVKEH (72 aa). Over 153–392 the chain is Extracellular; it reads SKISTFSVSG…TAQSTTTSSN (240 aa). A disordered region spans residues 368–392; it reads ISAQNAKKTDASSENTAQSTTTSSN.

Belongs to the FtsQ/DivIB family. DivIB subfamily.

It localises to the cell membrane. In terms of biological role, cell division protein that may be involved in stabilizing or promoting the assembly of the division complex. This is Cell division protein DivIB from Lactococcus lactis subsp. lactis (strain IL1403) (Streptococcus lactis).